We begin with the raw amino-acid sequence, 345 residues long: Probable translocation protein y4yO (345 aa).

A compositionally biased stretch (basic and acidic residues) spans 1–22 (MSDTSEEKSHGATPKKLSDARK). The interval 1–25 (MSDTSEEKSHGATPKKLSDARKRGQ) is disordered. Helical transmembrane passes span 87-107 (LATV…AALL), 151-171 (VLVL…TMVY), and 189-209 (QLIG…LLLQ).

It belongs to the type III secretion exporter family.

It localises to the cell membrane. In terms of biological role, could be involved in the secretion of an unknown factor. The chain is Probable translocation protein y4yO from Sinorhizobium fredii (strain NBRC 101917 / NGR234).